Here is a 351-residue protein sequence, read N- to C-terminus: Minor outer capsid protein P9 (351 aa).

The tract at residues 246-308 is disordered; it reads GVPAALPQPD…KAVPSGNVSA (63 aa). The segment covering 285 to 297 has biased composition (basic and acidic residues); that stretch reads MIRKKVETSKDAP.

Belongs to the phytoreovirus minor outer capsid protein P9 family.

The protein resides in the virion. Its subcellular location is the host cytoplasm. In terms of biological role, minor outer capsid protein. This Rice dwarf virus (isolate O) (RDV) protein is Minor outer capsid protein P9.